A 209-amino-acid chain; its full sequence is High frequency lysogenization protein HflD homolog (209 aa).

Positions 95–132 (LERKLAASKGAMNTLGNRIADLSRQLEHFELESDTLMS) form a coiled coil.

It belongs to the HflD family.

The protein resides in the cytoplasm. The protein localises to the cell inner membrane. In Cronobacter sakazakii (strain ATCC BAA-894) (Enterobacter sakazakii), this protein is High frequency lysogenization protein HflD homolog.